A 590-amino-acid chain; its full sequence is Sulfoacetaldehyde acetyltransferase (590 aa).

Belongs to the TPP enzyme family. The cofactor is Mg(2+). It depends on thiamine diphosphate as a cofactor.

The protein localises to the cytoplasm. The catalysed reaction is acetyl phosphate + sulfite + H(+) = sulfoacetaldehyde + phosphate. It functions in the pathway organosulfur degradation; taurine degradation via aerobic pathway; acetyl phosphate and sulfite from taurine: step 2/2. In Rhodobacter capsulatus (strain ATCC BAA-309 / NBRC 16581 / SB1003), this protein is Sulfoacetaldehyde acetyltransferase.